A 21-amino-acid chain; its full sequence is Bombinin-H4 (21 aa).

Ile-2 is subject to D-allo-isoleucine. Position 20 is an isoleucine amide (Ile-20).

It belongs to the bombinin family. Expressed by the skin glands.

The protein resides in the secreted. Functionally, has antimicrobial and hemolytic activities. The polypeptide is Bombinin-H4 (Bombina variegata (Yellow-bellied toad)).